A 425-amino-acid chain; its full sequence is Putative type I restriction enzyme MjaX specificity subunit (425 aa).

This sequence belongs to the type-I restriction system S methylase family.

Functionally, a putative specificity (S) subunit of a type I restriction enzyme thought to recognize 5'-TAGN(6)TGC-3'; the other subunits are unknown. The chain is Putative type I restriction enzyme MjaX specificity subunit from Methanocaldococcus jannaschii (strain ATCC 43067 / DSM 2661 / JAL-1 / JCM 10045 / NBRC 100440) (Methanococcus jannaschii).